The following is an 868-amino-acid chain: MARLLLALLAWLAQMSPVRAAGSVRLAGGLTLGGLFPVHARGAAGRACGQLKKEQGVHRLEAMLYALDRVNADPELLPGVRLGARLLDTCSRDTYALEQALSFVQALIRGRGDGDEAAVRCPGGVPPLRAAPPERVVAVVGASASSVSIMVANVLRLFAIPQISYASTAPELSDSTRYDFFSRVVPPDSYQAQAMVDIVRALGWNYVSTLASEGNYGESGVEAFVQISREAGGVCIAQSIKIPREPKPGEFNKVIKRLMETPNARGIIIFANEDDIRRVLEATRQANLTGHFLWVGSDSWGSKTSPVLSLEDVAVGAITILPKRASIDGFDQYFMTRSLENNRRNIWFAEFWEENFNCKLTSSGGQSDEATRKCTGEERIGQDSAYEQEGKVQFVIDAVYAIAHALHSMHQALCPGYTGLCPAMEPTDGRTLLQYIRAVRFNGSAGTPVMFNENGDAPGRYDIFQYQATNGSASSGGYQVVGQWAEALRLDVEALQWSGDPHEVPPSQCSLPCGPGERKKMVKGVPCCWHCEACDGYRFQVDEFTCEACPRDMRPTPNHTGCRPTPVVRLTWSSPWAAPPLLLAVLGIMATTTVVGTFVRHNNTPIVRASGRELSYVLLTGIFLIYAVTFLMVAEPGAAVCATRRLFLGLGTTLSYSALLTKTNRIYRIFEQGKRSVTPPPFISPTSQLVITFSLTSLQVVGVIAWLGAQPPHSVIDYEEQRTVDPEQARGVLKCDMSDLSLIGCLGYSLLLMVTCTVYAIKARGVPETFNEAKPIGFTMYTTCIVWLAFVPIFFGTAQSAEKIYIQTTTLTVSLSLSASVSLGMLYVPKTYVILFHPEQNVQKRKRSLKTTSTVAAPPKGADTEDPK.

The first 20 residues, 1–20, serve as a signal peptide directing secretion; it reads MARLLLALLAWLAQMSPVRA. Residues 21–576 lie on the Extracellular side of the membrane; it reads AGSVRLAGGL…VVRLTWSSPW (556 aa). The cysteines at positions 48 and 90 are disulfide-linked. L-glutamate contacts are provided by residues Ser-145, 166 to 168, and Tyr-216; that span reads AST. Intrachain disulfides connect Cys-235–Cys-527, Cys-358–Cys-374, Cys-414–Cys-421, Cys-509–Cys-528, Cys-513–Cys-531, Cys-534–Cys-546, and Cys-549–Cys-562. The N-linked (GlcNAc...) asparagine glycan is linked to Asn-287. Asp-298 provides a ligand contact to L-glutamate. Position 391 (Lys-391) interacts with L-glutamate. Asn-442 and Asn-470 each carry an N-linked (GlcNAc...) asparagine glycan. The N-linked (GlcNAc...) asparagine glycan is linked to Asn-558. The chain crosses the membrane as a helical span at residues 577–599; that stretch reads AAPPLLLAVLGIMATTTVVGTFV. The Cytoplasmic segment spans residues 600–613; sequence RHNNTPIVRASGRE. A helical membrane pass occupies residues 614–634; the sequence is LSYVLLTGIFLIYAVTFLMVA. Over 635–645 the chain is Extracellular; sequence EPGAAVCATRR. The helical transmembrane segment at 646–664 threads the bilayer; the sequence is LFLGLGTTLSYSALLTKTN. Over 665–688 the chain is Cytoplasmic; it reads RIYRIFEQGKRSVTPPPFISPTSQ. Residues 689-709 form a helical membrane-spanning segment; it reads LVITFSLTSLQVVGVIAWLGA. Over 710 to 739 the chain is Extracellular; it reads QPPHSVIDYEEQRTVDPEQARGVLKCDMSD. A helical membrane pass occupies residues 740 to 761; that stretch reads LSLIGCLGYSLLLMVTCTVYAI. Topologically, residues 762 to 774 are cytoplasmic; it reads KARGVPETFNEAK. Residues 775–797 traverse the membrane as a helical segment; sequence PIGFTMYTTCIVWLAFVPIFFGT. Residues 798-810 lie on the Extracellular side of the membrane; sequence AQSAEKIYIQTTT. The helical transmembrane segment at 811–836 threads the bilayer; that stretch reads LTVSLSLSASVSLGMLYVPKTYVILF. Topologically, residues 837-868 are cytoplasmic; it reads HPEQNVQKRKRSLKTTSTVAAPPKGADTEDPK. Residues 845 to 868 form a disordered region; the sequence is RKRSLKTTSTVAAPPKGADTEDPK.

Belongs to the G-protein coupled receptor 3 family. As to quaternary structure, homodimer. Interacts with GPR179. Interacts with photoreceptor synaptic protein LRIT1 (via its N-terminal extracellular domain).

The protein localises to the cell membrane. It is found in the endoplasmic reticulum membrane. It localises to the golgi apparatus membrane. The protein resides in the cell projection. Its subcellular location is the dendrite. G-protein coupled receptor for glutamate. Ligand binding causes a conformation change that triggers signaling via guanine nucleotide-binding proteins (G proteins) and modulates the activity of down-stream effectors, such as adenylate cyclase. Signaling inhibits adenylate cyclase activity. Signaling stimulates TRPM1 channel activity and Ca(2+) uptake. Required for normal vision. This is Metabotropic glutamate receptor 6 (GRM6) from Oryctolagus cuniculus (Rabbit).